We begin with the raw amino-acid sequence, 254 residues long: UPF0246 protein FTM_0239 (254 aa).

Belongs to the UPF0246 family.

This is UPF0246 protein FTM_0239 from Francisella tularensis subsp. mediasiatica (strain FSC147).